Consider the following 150-residue polypeptide: UPF0178 protein Sbal_1771 (150 aa).

It belongs to the UPF0178 family.

This Shewanella baltica (strain OS155 / ATCC BAA-1091) protein is UPF0178 protein Sbal_1771.